The primary structure comprises 194 residues: RxLR effector protein Avh240 (194 aa).

Residues 1 to 23 (MRPYFTLLLALAFILACTNLVEA) form the signal peptide. The RxLR-dEER motif lies at 38-57 (RHLRTAVASVVDLPDDEDER). Residues 58 to 108 (LLGYNTVQLWRMRRTANKLMNGKLTTQKEAALKKWMASQQDKFLAKWLKSS) are host plasma membrane-binding.

Belongs to the RxLR effector family. In terms of assembly, homodimer. Interacts with host soybean aspartic protease AP1.

It localises to the secreted. Its subcellular location is the host cell membrane. Functionally, effector that suppresses plant defense responses during the early stages of pathogen infection. Suppresses cell death induced by effectors and PAMPs in plant hosts. Avh240 dimerizes and localizes at the plasma membrane to interfere with aspartic protease AP1 secretion, which presents an effective mechanism by which effector proteins suppress plant apoplastic immunity. The chain is RxLR effector protein Avh240 from Phytophthora sojae (Soybean stem and root rot agent).